The chain runs to 193 residues: Ion-translocating oxidoreductase complex subunit A (193 aa).

6 helical membrane passes run 5–25, 39–59, 63–83, 102–122, 134–154, and 171–191; these read LLLLVGTVLINNFVLVKFLGL, IGMGLATTFVMTLASACSYLM, ILIPLNIAYLRTLAFILVIAV, LLGIFLPLITTNCAVLGVALL, IIYGFGAATGFSLVLILFAAM, and SIAMITAGLMSLAFMGFTGLI.

This sequence belongs to the NqrDE/RnfAE family. The complex is composed of six subunits: RnfA, RnfB, RnfC, RnfD, RnfE and RnfG.

It is found in the cell inner membrane. Part of a membrane-bound complex that couples electron transfer with translocation of ions across the membrane. The chain is Ion-translocating oxidoreductase complex subunit A from Aeromonas hydrophila subsp. hydrophila (strain ATCC 7966 / DSM 30187 / BCRC 13018 / CCUG 14551 / JCM 1027 / KCTC 2358 / NCIMB 9240 / NCTC 8049).